The primary structure comprises 120 residues: Crustacean hyperglycemic hormones 4 (120 aa).

The first 26 residues, 1–26 (MVALNTLSAVSAALLVLAASPSPASA), serve as a signal peptide directing secretion. Disulfide bonds link C53-C89, C69-C85, and C72-C98. V118 bears the Valine amide mark.

This sequence belongs to the arthropod CHH/MIH/GIH/VIH hormone family.

It is found in the secreted. Its function is as follows. Hormone found in the sinus gland of isopods and decapods which controls the blood sugar level. Has a secretagogue action over the amylase released from the midgut gland. May act as a stress hormone and may be involved in the control of molting and reproduction. The sequence is that of Crustacean hyperglycemic hormones 4 (CHH4) from Penaeus monodon (Giant tiger prawn).